Reading from the N-terminus, the 252-residue chain is MILYEYPFNERIRTLLRLEDLFDRLEYFLGQDHAQQHHVALTTLFEIIDVAGRADLKTDLIKELERQRQALAPLRANPQIDQDALDSVIGEIEQGIAMLNQTVGKAGQLLTDNEWLTSIRSRAIIPGGTCEFDLPAYYAWQHRPAEDRRADILKWARPLVSLRMGTTIVLRLLREAGQSGKVIATGGSYQQMLSGRSYQLMQVYLDDSLLAFIPEMSANKYMLWVRFTQQDGDLRPRSVDADIPFLLKLCNF.

This sequence belongs to the ZapD family. As to quaternary structure, interacts with FtsZ.

Its subcellular location is the cytoplasm. Its function is as follows. Cell division factor that enhances FtsZ-ring assembly. Directly interacts with FtsZ and promotes bundling of FtsZ protofilaments, with a reduction in FtsZ GTPase activity. The polypeptide is Cell division protein ZapD (Cupriavidus taiwanensis (strain DSM 17343 / BCRC 17206 / CCUG 44338 / CIP 107171 / LMG 19424 / R1) (Ralstonia taiwanensis (strain LMG 19424))).